Reading from the N-terminus, the 316-residue chain is 2,3-dihydroxyphenylpropionate/2,3-dihydroxicinnamic acid 1,2-dioxygenase (316 aa).

Residue histidine 118 is the Proton donor of the active site. Histidine 182 serves as the catalytic Proton acceptor.

Belongs to the LigB/MhpB extradiol dioxygenase family. As to quaternary structure, homotetramer. The cofactor is Fe(2+).

It catalyses the reaction 3-(2,3-dihydroxyphenyl)propanoate + O2 = (2Z,4E)-2-hydroxy-6-oxonona-2,4-dienedioate + H(+). It carries out the reaction (2E)-3-(2,3-dihydroxyphenyl)prop-2-enoate + O2 = (2Z,4E,7E)-2-hydroxy-6-oxonona-2,4,7-trienedioate + H(+). The protein operates within aromatic compound metabolism; 3-phenylpropanoate degradation. Functionally, catalyzes the non-heme iron(II)-dependent oxidative cleavage of 2,3-dihydroxyphenylpropionic acid and 2,3-dihydroxicinnamic acid into 2-hydroxy-6-ketononadienedioate and 2-hydroxy-6-ketononatrienedioate, respectively. The protein is 2,3-dihydroxyphenylpropionate/2,3-dihydroxicinnamic acid 1,2-dioxygenase of Mycolicibacterium vanbaalenii (strain DSM 7251 / JCM 13017 / BCRC 16820 / KCTC 9966 / NRRL B-24157 / PYR-1) (Mycobacterium vanbaalenii).